The following is a 635-amino-acid chain: Extracellular metalloproteinase 1 (635 aa).

Residues 1–19 (MHGLLLAAGLLSLPLHVLA) form the signal peptide. A propeptide spanning residues 20 to 246 (HPQPSTSTSL…VHNVVDYVAH (227 aa)) is cleaved from the precursor. An N-linked (GlcNAc...) asparagine glycan is attached at Asn287. Residue His430 participates in Zn(2+) binding. Glu431 is an active-site residue. His434 contributes to the Zn(2+) binding site. Asn475, Asn594, and Asn623 each carry an N-linked (GlcNAc...) asparagine glycan.

The protein belongs to the peptidase M36 family. Zn(2+) is required as a cofactor.

It is found in the secreted. Functionally, secreted metalloproteinase probably acting as a virulence factor. In Trichophyton tonsurans (Scalp ringworm fungus), this protein is Extracellular metalloproteinase 1 (MEP1).